Consider the following 479-residue polypeptide: Ribosomal RNA small subunit methyltransferase F (479 aa).

S-adenosyl-L-methionine contacts are provided by residues 125–131 (AAAPGSK), E149, D176, and D194. Catalysis depends on C247, which acts as the Nucleophile.

Belongs to the class I-like SAM-binding methyltransferase superfamily. RsmB/NOP family.

It localises to the cytoplasm. It catalyses the reaction cytidine(1407) in 16S rRNA + S-adenosyl-L-methionine = 5-methylcytidine(1407) in 16S rRNA + S-adenosyl-L-homocysteine + H(+). Specifically methylates the cytosine at position 1407 (m5C1407) of 16S rRNA. The chain is Ribosomal RNA small subunit methyltransferase F from Escherichia coli (strain SMS-3-5 / SECEC).